We begin with the raw amino-acid sequence, 754 residues long: Fibronectin type III domain-containing protein 1 (754 aa).

The N-terminal stretch at 1–19 (MKSWISISFLCMLFPLSNG) is a signal peptide. Disordered regions lie at residues 40-61 (SLQG…SQGG), 85-106 (AQIS…TQFS), and 130-163 (AQHS…AQSG). The span at 130-161 (AQHSQAGAQGSQFPQSAAHTAQHHQGTAQPAQ) shows a compositional bias: low complexity. 5 Fibronectin type-III domains span residues 250–355 (PPQS…TPDL), 359–449 (APLN…TDKF), 453–545 (APRN…TKMD), 549–642 (EPMS…LPKP), and 645–742 (LVPN…SFPG). The tract at residues 731–754 (SNLSSQQFSFPGQQVGQQQSNPWI) is disordered.

In terms of tissue distribution, prismatic layer of shell (at protein level). Expressed primarily in the mantle with highest level in the outer epithelium of the mantle edge and lower level in the mantle pallium.

The protein localises to the secreted. The protein is Fibronectin type III domain-containing protein 1 of Margaritifera margaritifera (Freshwater pearl mussel).